The primary structure comprises 361 residues: Peptide chain release factor 1 (361 aa).

Gln-235 is subject to N5-methylglutamine.

This sequence belongs to the prokaryotic/mitochondrial release factor family. In terms of processing, methylated by PrmC. Methylation increases the termination efficiency of RF1.

The protein localises to the cytoplasm. Peptide chain release factor 1 directs the termination of translation in response to the peptide chain termination codons UAG and UAA. In Xanthomonas campestris pv. campestris (strain 8004), this protein is Peptide chain release factor 1.